The primary structure comprises 362 residues: DLA class I histocompatibility antigen, A9/A9 alpha chain (362 aa).

An N-terminal signal peptide occupies residues 1–24; the sequence is MEVVMPRALLVLLSAALALTPTRA. Residues 25–114 are alpha-1; that stretch reads GSHSLRYFYT…LRGYYNQSEA (90 aa). Over 25-306 the chain is Extracellular; it reads GSHSLRYFYT…RRWEPSPLST (282 aa). A glycan (N-linked (GlcNAc...) asparagine) is linked at N110. The segment at 115–207 is alpha-2; the sequence is GSHTRQTMYG…EMGKETLLRA (93 aa). 2 disulfide bridges follow: C125–C189 and C228–C284. Residues 208 to 299 form an alpha-3 region; sequence DPPSTRVTHH…GLPEPITRRW (92 aa). Positions 210–296 constitute an Ig-like C1-type domain; it reads PSTRVTHHPV…QHEGLPEPIT (87 aa). The tract at residues 300 to 306 is connecting peptide; it reads EPSPLST. A helical membrane pass occupies residues 307 to 329; that stretch reads IVIVSIAALVLLVVAGVIGAVIW. Residues 330-362 are Cytoplasmic-facing; it reads RKQRSGGKGPGYSHAARDDSAQGSDVSLTAPRV. Residues 333-362 form a disordered region; that stretch reads RSGGKGPGYSHAARDDSAQGSDVSLTAPRV.

It belongs to the MHC class I family. In terms of assembly, heterodimer of an alpha chain and a beta chain (beta-2-microglobulin).

The protein localises to the membrane. Functionally, involved in the presentation of foreign antigens to the immune system. In Canis lupus familiaris (Dog), this protein is DLA class I histocompatibility antigen, A9/A9 alpha chain.